A 310-amino-acid polypeptide reads, in one-letter code: Vomeronasal type-1 receptor 3 (310 aa).

Topologically, residues 1–5 (MASKD) are extracellular. A helical membrane pass occupies residues 6–26 (FAIGMILSQIMVGFLGNFFLL). The Cytoplasmic portion of the chain corresponds to 27 to 50 (YHYSFLHFTRGMLQSTDLTLKHLT). The helical transmembrane segment at 51–71 (IANSLVILSKGIPQTMAAFGL) threads the bilayer. Topologically, residues 72–91 (KDSLSDIGCKFVFYVHRVGR) are extracellular. A helical transmembrane segment spans residues 92-112 (AVCTGNACLLSVFQVITISSS). Residues 113–129 (EFRWAELKLHAHKYIRS) are Cytoplasmic-facing. Residues 130 to 150 (FILVLCWILNTLVNITVPLHV) traverse the membrane as a helical segment. Topologically, residues 151–186 (TGKWNSINSTKTNDYGYCSGGSRSRIPHSLHIVLLS) are extracellular. N158 is a glycosylation site (N-linked (GlcNAc...) asparagine). A helical transmembrane segment spans residues 187 to 207 (SLDVLCLGLMTLASGSMVFIL). At 208-235 (HRLKQQVQHIHGTNLSPRSSPESRVTQS) the chain is on the cytoplasmic side. The chain crosses the membrane as a helical span at residues 236-258 (ILVLVSTLCYFTRSPPSLHMSLF). Residues 259-263 (PNPSW) are Extracellular-facing. The helical transmembrane segment at 264-284 (WPLNASALITACFPTVSPFVL) threads the bilayer. The Cytoplasmic portion of the chain corresponds to 285 to 310 (MSRHPRIPRLGSACCGRNPQFPKLVR).

This sequence belongs to the G-protein coupled receptor 1 family.

It is found in the cell membrane. Functionally, putative pheromone receptor. In Pan troglodytes (Chimpanzee), this protein is Vomeronasal type-1 receptor 3 (VN1R3).